Consider the following 388-residue polypeptide: Succinate--CoA ligase [ADP-forming] subunit beta (388 aa).

One can recognise an ATP-grasp domain in the interval 9–244 (KQLFADYGLP…PSQEDPREAH (236 aa)). Residues K46, 53–55 (GRG), E99, T102, and E107 contribute to the ATP site. Residues N199 and D213 each contribute to the Mg(2+) site. Substrate is bound by residues N264 and 321 to 323 (GIV).

Belongs to the succinate/malate CoA ligase beta subunit family. Heterotetramer of two alpha and two beta subunits. Mg(2+) serves as cofactor.

The catalysed reaction is succinate + ATP + CoA = succinyl-CoA + ADP + phosphate. The enzyme catalyses GTP + succinate + CoA = succinyl-CoA + GDP + phosphate. It participates in carbohydrate metabolism; tricarboxylic acid cycle; succinate from succinyl-CoA (ligase route): step 1/1. Succinyl-CoA synthetase functions in the citric acid cycle (TCA), coupling the hydrolysis of succinyl-CoA to the synthesis of either ATP or GTP and thus represents the only step of substrate-level phosphorylation in the TCA. The beta subunit provides nucleotide specificity of the enzyme and binds the substrate succinate, while the binding sites for coenzyme A and phosphate are found in the alpha subunit. The sequence is that of Succinate--CoA ligase [ADP-forming] subunit beta from Hahella chejuensis (strain KCTC 2396).